The sequence spans 508 residues: Flavonoid 3'-monooxygenase CYP75B137 (508 aa).

The chain crosses the membrane as a helical span at residues 2–22; the sequence is LTFFFLWISTLLLSSFIVYLL. Residue cysteine 445 coordinates heme.

The protein belongs to the cytochrome P450 family. Heme is required as a cofactor. Expressed in young cromes.

The protein resides in the membrane. The enzyme catalyses a 3'-unsubstituted flavone + reduced [NADPH--hemoprotein reductase] + O2 = a 3'-hydroxyflavone + oxidized [NADPH--hemoprotein reductase] + H2O + H(+). The catalysed reaction is (2S)-naringenin + reduced [NADPH--hemoprotein reductase] + O2 = (S)-eriodictyol + oxidized [NADPH--hemoprotein reductase] + H2O + H(+). It catalyses the reaction (2R,3R)-dihydrokaempferol + reduced [NADPH--hemoprotein reductase] + O2 = (2R,3R)-dihydroquercetin + oxidized [NADPH--hemoprotein reductase] + H2O + H(+). It carries out the reaction kaempferol + reduced [NADPH--hemoprotein reductase] + O2 = quercetin + oxidized [NADPH--hemoprotein reductase] + H2O + H(+). The protein operates within flavonoid metabolism. Flavonoid 3'-hydroxylase that catalyzes the 3'-hydroxylation of flavanones, dihydroflavonols and flavonols. Converts narigenin to eriodictyol, dihydrokaempferol to dihydroquercetin and kaempferol to quercetin. The chain is Flavonoid 3'-monooxygenase CYP75B137 from Crocosmia x crocosmiiflora (Montbretia).